A 423-amino-acid polypeptide reads, in one-letter code: Protein CLP1 homolog (423 aa).

ATP is bound by residues Glu19, Lys60, and 122 to 127; that span reads DVGKTT.

Belongs to the Clp1 family. Clp1 subfamily.

It is found in the nucleus. In terms of biological role, required for endonucleolytic cleavage during polyadenylation-dependent pre-mRNA 3'-end formation. The chain is Protein CLP1 homolog (cbc) from Anopheles gambiae (African malaria mosquito).